The primary structure comprises 65 residues: Small ribosomal subunit protein bS21B (65 aa).

The protein belongs to the bacterial ribosomal protein bS21 family.

The protein is Small ribosomal subunit protein bS21B of Francisella tularensis subsp. holarctica (strain LVS).